A 301-amino-acid chain; its full sequence is 4-hydroxy-tetrahydrodipicolinate synthase (301 aa).

Residue threonine 57 coordinates pyruvate. The active-site Proton donor/acceptor is tyrosine 143. Lysine 171 functions as the Schiff-base intermediate with substrate in the catalytic mechanism. Position 211 (isoleucine 211) interacts with pyruvate.

The protein belongs to the DapA family. As to quaternary structure, homotetramer; dimer of dimers.

Its subcellular location is the cytoplasm. The enzyme catalyses L-aspartate 4-semialdehyde + pyruvate = (2S,4S)-4-hydroxy-2,3,4,5-tetrahydrodipicolinate + H2O + H(+). It functions in the pathway amino-acid biosynthesis; L-lysine biosynthesis via DAP pathway; (S)-tetrahydrodipicolinate from L-aspartate: step 3/4. Functionally, catalyzes the condensation of (S)-aspartate-beta-semialdehyde [(S)-ASA] and pyruvate to 4-hydroxy-tetrahydrodipicolinate (HTPA). In Bifidobacterium longum (strain DJO10A), this protein is 4-hydroxy-tetrahydrodipicolinate synthase.